The following is a 154-amino-acid chain: MVTFSQKPAEVVKKWILIDAENLVLGRLATLVANRLRGKHKPTFTPHVDDGDNVIVINADKVVLTGKKYTDKKYYWHTGYIGGIKERTARQILEGRFPERIIEKAVERMIPRGPLGRRQMRNLRVYAGSQHPHEAQQPEALDVGTLNRKNKRIA.

Residues 129–154 (SQHPHEAQQPEALDVGTLNRKNKRIA) form a disordered region.

It belongs to the universal ribosomal protein uL13 family. In terms of assembly, part of the 50S ribosomal subunit.

This protein is one of the early assembly proteins of the 50S ribosomal subunit, although it is not seen to bind rRNA by itself. It is important during the early stages of 50S assembly. The polypeptide is Large ribosomal subunit protein uL13 (Bartonella bacilliformis (strain ATCC 35685 / KC583 / Herrer 020/F12,63)).